A 637-amino-acid chain; its full sequence is Formate--tetrahydrofolate ligase (637 aa).

81-88 (TPLGEGKS) provides a ligand contact to ATP.

The protein belongs to the formate--tetrahydrofolate ligase family. As to quaternary structure, homodimer.

The catalysed reaction is (6S)-5,6,7,8-tetrahydrofolate + formate + ATP = (6R)-10-formyltetrahydrofolate + ADP + phosphate. Its pathway is one-carbon metabolism; tetrahydrofolate interconversion. The sequence is that of Formate--tetrahydrofolate ligase from Spinacia oleracea (Spinach).